The chain runs to 94 residues: Cyclin-dependent kinases regulatory subunit (94 aa).

The protein belongs to the CKS family. Forms a homohexamer that can probably bind six kinase subunits. Interacts with cdk-1.

The protein resides in the nucleus. In terms of biological role, binds to the catalytic subunit of the cyclin dependent kinases and is essential for their biological function. Has a role in the exit from M phase during early mitotic cell division. More specifically, thought to act by degrading B-type cyclins that causes breakdown of nuclear envelope and exit mitosis. This Caenorhabditis elegans protein is Cyclin-dependent kinases regulatory subunit (cks-1).